Here is a 543-residue protein sequence, read N- to C-terminus: uncharacterized protein (543 aa).

The 93-residue stretch at Met-1–Ala-93 folds into the PE domain. The disordered stretch occupies residues Gly-194–Gly-214.

Belongs to the mycobacterial PE family. PGRS subfamily.

This is an uncharacterized protein from Mycobacterium tuberculosis (strain CDC 1551 / Oshkosh).